The chain runs to 153 residues: SsrA-binding protein (153 aa).

The segment covering 133–143 (ADLKERDDKRQ) has biased composition (basic and acidic residues). The tract at residues 133-153 (ADLKERDDKRQMQQALKQQQY) is disordered. Over residues 144 to 153 (MQQALKQQQY) the composition is skewed to low complexity.

The protein belongs to the SmpB family.

The protein localises to the cytoplasm. Its function is as follows. Required for rescue of stalled ribosomes mediated by trans-translation. Binds to transfer-messenger RNA (tmRNA), required for stable association of tmRNA with ribosomes. tmRNA and SmpB together mimic tRNA shape, replacing the anticodon stem-loop with SmpB. tmRNA is encoded by the ssrA gene; the 2 termini fold to resemble tRNA(Ala) and it encodes a 'tag peptide', a short internal open reading frame. During trans-translation Ala-aminoacylated tmRNA acts like a tRNA, entering the A-site of stalled ribosomes, displacing the stalled mRNA. The ribosome then switches to translate the ORF on the tmRNA; the nascent peptide is terminated with the 'tag peptide' encoded by the tmRNA and targeted for degradation. The ribosome is freed to recommence translation, which seems to be the essential function of trans-translation. This chain is SsrA-binding protein, found in Protochlamydia amoebophila (strain UWE25).